Consider the following 1715-residue polypeptide: Neurexin-2 (1715 aa).

The signal sequence occupies residues 1 to 29; that stretch reads MALGSRWRPPPQLPPLLLLLALVAGVRGL. The Laminin G-like 1 domain maps to 30–206; the sequence is EFGGGPGQWA…LRGAAADPLC (177 aa). The Extracellular segment spans residues 30-1639; it reads EFGGGPGQWA…EVIRESSSTT (1610 aa). Asparagine 60 carries N-linked (GlcNAc...) asparagine glycosylation. An EGF-like 1 domain is found at 202 to 242; that stretch reads ADPLCAPARNPCANGGLCTVLAPGEVGCDCSHTGFGGKFCS. Intrachain disulfides connect cysteine 206-cysteine 219, cysteine 213-cysteine 229, and cysteine 231-cysteine 241. Laminin G-like domains are found at residues 289 to 486 and 493 to 686; these read VATF…SFRC and DPVT…APFC. Aspartate 335 provides a ligand contact to Ca(2+). N-linked (GlcNAc...) asparagine glycosylation is present at asparagine 338. Residues leucine 352 and methionine 420 each coordinate Ca(2+). Intrachain disulfides connect cysteine 450–cysteine 486, cysteine 657–cysteine 686, cysteine 694–cysteine 705, cysteine 699–cysteine 714, and cysteine 716–cysteine 726. The region spanning 690–727 is the EGF-like 2 domain; sequence TLKQCASAPCRNGGICREGWNRFVCDCIGTGFLGRVCE. 2 Laminin G-like domains span residues 732–907 and 921–1096; these read VLSY…ITYC and DPVT…ERGC. 2 residues coordinate Ca(2+): aspartate 779 and leucine 796. An N-linked (GlcNAc...) asparagine glycan is attached at asparagine 844. Ca(2+) is bound at residue arginine 857. 4 cysteine pairs are disulfide-bonded: cysteine 1068–cysteine 1096, cysteine 1103–cysteine 1114, cysteine 1108–cysteine 1123, and cysteine 1125–cysteine 1135. The 38-residue stretch at 1099-1136 folds into the EGF-like 3 domain; the sequence is PSTTCTEESCANQGVCLQQWDGFTCDCTMTSYGGPVCN. The 209-residue stretch at 1140 to 1348 folds into the Laminin G-like 6 domain; sequence TTYIFGKGGA…HLRLVGEGPS (209 aa). 2 residues coordinate Ca(2+): aspartate 1192 and valine 1209. N-linked (GlcNAc...) asparagine glycosylation occurs at asparagine 1239. Residues isoleucine 1291 and asparagine 1293 each coordinate Ca(2+). Residue serine 1403 is glycosylated (O-linked (Xyl...) (heparan sulfate) serine). 3 disordered regions span residues 1461 to 1511, 1529 to 1549, and 1583 to 1626; these read ATQD…LPPT, LLSP…ATGA, and LGPG…RGPP. A helical transmembrane segment spans residues 1640–1660; that stretch reads GMVVGIVAAAALCILILLYAM. The Cytoplasmic segment spans residues 1661–1715; it reads YKYRNRDEGSYQVDQSRNYISNSAQSNGAVVKEKAPAAPKTPSKAKKNKDKEYYV. Positions 1682–1715 are disordered; that stretch reads NSAQSNGAVVKEKAPAAPKTPSKAKKNKDKEYYV.

The protein belongs to the neurexin family. In terms of assembly, the laminin G-like domain 1 binds to NXPH1. Interacts with PATJ. Interacts with CBLN1, CBLN2 and, less avidly, with CBLN4. Specific isoforms bind neuroligins NLGN1, NLGN2 and NLGN3. Isoform 5c/alpha-2C binds to alpha-dystroglycan. Interacts (via Laminin G-like 1 domain) with IGSF21 (Ig-like 1 domain) in a trans-interaction manner. Interacts with CLSTN3. O-glycosylated; contains heparan sulfate. Heparan sulfate attachment is required for synapse development by mediating interactions with neuroligins. As to expression, brain (neuronal synapse).

The protein localises to the presynaptic cell membrane. Neuronal cell surface protein that may be involved in cell recognition and cell adhesion. May mediate intracellular signaling. The chain is Neurexin-2 (Nrxn2) from Rattus norvegicus (Rat).